Here is a 454-residue protein sequence, read N- to C-terminus: Chromosomal replication initiator protein DnaA (454 aa).

A domain I, interacts with DnaA modulators region spans residues 1 to 71 (MTKEQWGQLQ…HEVRQEDPAV (71 aa)). The interval 71 to 112 (VRRLRFAVPSHVNATTKPARPAQATAPRAPAEKTPRSTLSTA) is domain II. Residues 82–108 (VNATTKPARPAQATAPRAPAEKTPRST) form a disordered region. A compositionally biased stretch (low complexity) spans 84–99 (ATTKPARPAQATAPRA). The tract at residues 113-334 (PLDARFTFDN…GALTRLCAFA (222 aa)) is domain III, AAA+ region. 4 residues coordinate ATP: Gly-157, Gly-159, Lys-160, and Thr-161. Residues 335-454 (SLVGREIDME…LELLRRALEE (120 aa)) form a domain IV, binds dsDNA region.

Belongs to the DnaA family. As to quaternary structure, oligomerizes as a right-handed, spiral filament on DNA at oriC.

Its subcellular location is the cytoplasm. Plays an essential role in the initiation and regulation of chromosomal replication. ATP-DnaA binds to the origin of replication (oriC) to initiate formation of the DNA replication initiation complex once per cell cycle. Binds the DnaA box (a 9 base pair repeat at the origin) and separates the double-stranded (ds)DNA. Forms a right-handed helical filament on oriC DNA; dsDNA binds to the exterior of the filament while single-stranded (ss)DNA is stabiized in the filament's interior. The ATP-DnaA-oriC complex binds and stabilizes one strand of the AT-rich DNA unwinding element (DUE), permitting loading of DNA polymerase. After initiation quickly degrades to an ADP-DnaA complex that is not apt for DNA replication. Binds acidic phospholipids. This is Chromosomal replication initiator protein DnaA from Roseobacter denitrificans (strain ATCC 33942 / OCh 114) (Erythrobacter sp. (strain OCh 114)).